Here is a 365-residue protein sequence, read N- to C-terminus: Histidinol-phosphate aminotransferase (365 aa).

Position 220 is an N6-(pyridoxal phosphate)lysine (Lys220).

This sequence belongs to the class-II pyridoxal-phosphate-dependent aminotransferase family. Histidinol-phosphate aminotransferase subfamily. In terms of assembly, homodimer. Pyridoxal 5'-phosphate is required as a cofactor.

It carries out the reaction L-histidinol phosphate + 2-oxoglutarate = 3-(imidazol-4-yl)-2-oxopropyl phosphate + L-glutamate. It participates in amino-acid biosynthesis; L-histidine biosynthesis; L-histidine from 5-phospho-alpha-D-ribose 1-diphosphate: step 7/9. The polypeptide is Histidinol-phosphate aminotransferase (hisC) (Xylella fastidiosa (strain Temecula1 / ATCC 700964)).